Consider the following 71-residue polypeptide: uncharacterized protein (71 aa).

Positions 20–32 (SSGRRQLTATQPR) are enriched in polar residues. A disordered region spans residues 20 to 46 (SSGRRQLTATQPRSDPESQRGRTSSNR).

This is an uncharacterized protein from Rhizobium leguminosarum.